Reading from the N-terminus, the 104-residue chain is Large ribosomal subunit protein uL23 (104 aa).

It belongs to the universal ribosomal protein uL23 family. As to quaternary structure, part of the 50S ribosomal subunit. Contacts protein L29, and trigger factor when it is bound to the ribosome.

One of the early assembly proteins it binds 23S rRNA. One of the proteins that surrounds the polypeptide exit tunnel on the outside of the ribosome. Forms the main docking site for trigger factor binding to the ribosome. In Trichormus variabilis (strain ATCC 29413 / PCC 7937) (Anabaena variabilis), this protein is Large ribosomal subunit protein uL23.